A 168-amino-acid polypeptide reads, in one-letter code: Shikimate kinase (168 aa).

12-17 (GAGKST) is an ATP binding site. Ser-16 is a Mg(2+) binding site. Positions 34, 58, and 80 each coordinate substrate. Arg-117 lines the ATP pocket. Arg-136 contributes to the substrate binding site. An ATP-binding site is contributed by Arg-153.

Belongs to the shikimate kinase family. In terms of assembly, monomer. It depends on Mg(2+) as a cofactor.

It is found in the cytoplasm. The enzyme catalyses shikimate + ATP = 3-phosphoshikimate + ADP + H(+). The protein operates within metabolic intermediate biosynthesis; chorismate biosynthesis; chorismate from D-erythrose 4-phosphate and phosphoenolpyruvate: step 5/7. Its function is as follows. Catalyzes the specific phosphorylation of the 3-hydroxyl group of shikimic acid using ATP as a cosubstrate. The chain is Shikimate kinase from Rhodococcus jostii (strain RHA1).